The sequence spans 250 residues: 2,3-bisphosphoglycerate-dependent phosphoglycerate mutase (250 aa).

Substrate-binding positions include 10 to 17, 23 to 24, arginine 62, 89 to 92, lysine 100, 116 to 117, and 185 to 186; these read RHGESQWN, TG, ERHY, RR, and GN. The active-site Tele-phosphohistidine intermediate is histidine 11. Residue glutamate 89 is the Proton donor/acceptor of the active site.

It belongs to the phosphoglycerate mutase family. BPG-dependent PGAM subfamily. As to quaternary structure, homodimer.

It carries out the reaction (2R)-2-phosphoglycerate = (2R)-3-phosphoglycerate. It participates in carbohydrate degradation; glycolysis; pyruvate from D-glyceraldehyde 3-phosphate: step 3/5. Functionally, catalyzes the interconversion of 2-phosphoglycerate and 3-phosphoglycerate. This Pectobacterium atrosepticum (strain SCRI 1043 / ATCC BAA-672) (Erwinia carotovora subsp. atroseptica) protein is 2,3-bisphosphoglycerate-dependent phosphoglycerate mutase.